The sequence spans 157 residues: Increased recombination centers protein 23 (157 aa).

The Cytoplasmic portion of the chain corresponds to 1–6; the sequence is MIEALE. The helical transmembrane segment at 7-29 threads the bilayer; sequence IVLLLVIQSLQYICRTCIAFLLI. At 30 to 33 the chain is on the lumenal side; it reads PFLG. Residues 34-56 form a helical membrane-spanning segment; that stretch reads LYAFDLFLYVYRMILYLSQMFNY. Residues 57 to 157 lie on the Cytoplasmic side of the membrane; the sequence is KRKLGRSKTN…EEGYYIAGSI (101 aa).

The protein localises to the endoplasmic reticulum membrane. Its function is as follows. Is probably involved in a pathway contributing to genomic integrity. In Saccharomyces cerevisiae (strain ATCC 204508 / S288c) (Baker's yeast), this protein is Increased recombination centers protein 23 (IRC23).